Here is a 460-residue protein sequence, read N- to C-terminus: ATP synthase subunit beta (460 aa).

150 to 157 (GGAGVGKT) serves as a coordination point for ATP.

The protein belongs to the ATPase alpha/beta chains family. As to quaternary structure, F-type ATPases have 2 components, CF(1) - the catalytic core - and CF(0) - the membrane proton channel. CF(1) has five subunits: alpha(3), beta(3), gamma(1), delta(1), epsilon(1). CF(0) has three main subunits: a(1), b(2) and c(9-12). The alpha and beta chains form an alternating ring which encloses part of the gamma chain. CF(1) is attached to CF(0) by a central stalk formed by the gamma and epsilon chains, while a peripheral stalk is formed by the delta and b chains.

It is found in the cell inner membrane. It catalyses the reaction ATP + H2O + 4 H(+)(in) = ADP + phosphate + 5 H(+)(out). Its function is as follows. Produces ATP from ADP in the presence of a proton gradient across the membrane. The catalytic sites are hosted primarily by the beta subunits. The sequence is that of ATP synthase subunit beta from Salmonella agona (strain SL483).